Here is a 529-residue protein sequence, read N- to C-terminus: Cytochrome P450 monooxygenase CLM2 (529 aa).

Residues 2–19 (LLIIVVLVGTLIYFLSFH) traverse the membrane as a helical segment. N-linked (GlcNAc...) asparagine glycans are attached at residues Asn244 and Asn281. Cys438 provides a ligand contact to heme.

It belongs to the cytochrome P450 family. It depends on heme as a cofactor.

The protein resides in the membrane. It carries out the reaction (-)-longiborneol + reduced [NADPH--hemoprotein reductase] + O2 = culmorin + oxidized [NADPH--hemoprotein reductase] + H2O + H(+). The protein operates within mycotoxin biosynthesis. Cytochrome P450 monooxygenase involved in the biosynthesis of culmorin, a tricyclic sesquiterpene diol reported to have antifungal activity and some phytotoxicity to wheat coleoptile tissue, contributing to Fusarium head blight disease. The terpene cyclase CLM1 is responsible for the cyclization of farnesyl diphosphate into the intermediate longiborneol. Longiborneol is then hydroxylated in a regio- and endo-stereoselective manner at position C-11 by the cytochrome P450 monooxygenase CLM2 to produce culmorin. Additional non-specific oxygenases are also able to hydroxylate longiborneol at other sites than C-11 leading to 3-hydroxylongiborneol, 5-hydroxylongiborneol, 12-hydroxylongiborneol and 15-hydroxylongiborneol. Moreover, another oxygenase capable of installing a C-11 exo-hydroxy group in longiborneol can also yield 11-epi-acetylculmorin. The production of these longiborneol derivatives is dwarfed by the high abundance of culmorin, suggesting that CLM2 displays superior enzymatic activity to the unidentified, possibly promiscuous, additional oxygenases. This chain is Cytochrome P450 monooxygenase CLM2, found in Gibberella zeae (strain ATCC MYA-4620 / CBS 123657 / FGSC 9075 / NRRL 31084 / PH-1) (Wheat head blight fungus).